Here is a 109-residue protein sequence, read N- to C-terminus: Protein phosphatase 1 regulatory subunit 1C (109 aa).

The tract at residues 25 to 109 (AEQIRKRRPT…TNEREEQRDH (85 aa)) is disordered. A compositionally biased stretch (basic and acidic residues) spans 45–54 (NPPEIDDKRG). Over residues 55 to 75 (PNTQGELQNASPKQRKQSVYT) the composition is skewed to polar residues. Residues 100 to 109 (TNEREEQRDH) show a composition bias toward basic and acidic residues.

It belongs to the protein phosphatase inhibitor 1 family.

It localises to the cytoplasm. Functionally, may increase cell susceptibility to TNF-induced apoptosis. In Homo sapiens (Human), this protein is Protein phosphatase 1 regulatory subunit 1C (PPP1R1C).